We begin with the raw amino-acid sequence, 250 residues long: MADS-box transcription factor 47 (250 aa).

The span at 1–10 (MAGGGGGGGR) shows a compositional bias: gly residues. Disordered stretches follow at residues 1 to 20 (MAGG…AATG) and 196 to 250 (SRME…FSSK). Residues 11–20 (GEGEGRAATG) are compositionally biased toward basic and acidic residues. The region spanning 20–80 (GKRERIAIRR…GKLFQFASTS (61 aa)) is the MADS-box domain. The K-box domain maps to 106-198 (QGEDSSTCAR…QLQVSRMSRM (93 aa)). Residues 214-224 (GQSSESVTNAS) are compositionally biased toward polar residues.

May interact with MADS18. In terms of tissue distribution, expressed in roots, shoots and developing panicles. Expressed in mature stems and leaves, flowering panicles, developing seeds, and mature seeds.

It localises to the nucleus. Functionally, transcription factor that modulates expressions of multiple genes involved in cell signaling and gene transcription. Plays a negative regulatory role in brassinosteroid signaling. The protein is MADS-box transcription factor 47 of Oryza sativa subsp. japonica (Rice).